The sequence spans 563 residues: Arginine--tRNA ligase (563 aa).

The protein belongs to the class-I aminoacyl-tRNA synthetase family. In terms of assembly, monomer.

It carries out the reaction tRNA(Arg) + L-arginine + ATP = L-arginyl-tRNA(Arg) + AMP + diphosphate. The chain is Arginine--tRNA ligase from Encephalitozoon cuniculi (strain GB-M1) (Microsporidian parasite).